A 235-amino-acid polypeptide reads, in one-letter code: Small ribosomal subunit protein uS2 (235 aa).

This sequence belongs to the universal ribosomal protein uS2 family.

The polypeptide is Small ribosomal subunit protein uS2 (Synechococcus sp. (strain RCC307)).